We begin with the raw amino-acid sequence, 206 residues long: ATP-dependent Clp protease proteolytic subunit 1 (206 aa).

The active-site Nucleophile is Ser100. His125 is an active-site residue.

It belongs to the peptidase S14 family. As to quaternary structure, fourteen ClpP subunits assemble into 2 heptameric rings which stack back to back to give a disk-like structure with a central cavity, resembling the structure of eukaryotic proteasomes.

Its subcellular location is the cytoplasm. The enzyme catalyses Hydrolysis of proteins to small peptides in the presence of ATP and magnesium. alpha-casein is the usual test substrate. In the absence of ATP, only oligopeptides shorter than five residues are hydrolyzed (such as succinyl-Leu-Tyr-|-NHMec, and Leu-Tyr-Leu-|-Tyr-Trp, in which cleavage of the -Tyr-|-Leu- and -Tyr-|-Trp bonds also occurs).. Its function is as follows. Cleaves peptides in various proteins in a process that requires ATP hydrolysis. Has a chymotrypsin-like activity. Plays a major role in the degradation of misfolded proteins. The sequence is that of ATP-dependent Clp protease proteolytic subunit 1 from Myxococcus xanthus (strain DK1622).